A 342-amino-acid polypeptide reads, in one-letter code: Aspartate carbamoyltransferase catalytic subunit (342 aa).

Arg54 and Thr55 together coordinate carbamoyl phosphate. L-aspartate is bound at residue Lys82. Carbamoyl phosphate-binding residues include Arg104, His134, and Gln137. The L-aspartate site is built by Arg177 and Arg232. The carbamoyl phosphate site is built by Gly277 and Pro278.

The protein belongs to the aspartate/ornithine carbamoyltransferase superfamily. ATCase family. As to quaternary structure, heterododecamer (2C3:3R2) of six catalytic PyrB chains organized as two trimers (C3), and six regulatory PyrI chains organized as three dimers (R2).

It carries out the reaction carbamoyl phosphate + L-aspartate = N-carbamoyl-L-aspartate + phosphate + H(+). Its pathway is pyrimidine metabolism; UMP biosynthesis via de novo pathway; (S)-dihydroorotate from bicarbonate: step 2/3. Catalyzes the condensation of carbamoyl phosphate and aspartate to form carbamoyl aspartate and inorganic phosphate, the committed step in the de novo pyrimidine nucleotide biosynthesis pathway. The chain is Aspartate carbamoyltransferase catalytic subunit from Pseudarthrobacter chlorophenolicus (strain ATCC 700700 / DSM 12829 / CIP 107037 / JCM 12360 / KCTC 9906 / NCIMB 13794 / A6) (Arthrobacter chlorophenolicus).